A 140-amino-acid polypeptide reads, in one-letter code: MAPGRRVERVAALIRKETSELLMHGIRDDRVHQGLISITQVDVSGDLQHCKIFVSVLADPEGRAQVMEGLQAASSFLRGELGRRLQMRRAPEVVFHLDRGLEKGASVLGLLGDLERERQERGEIPPGSDDAQNCHDDEPS.

The interval 116–140 is disordered; sequence RERQERGEIPPGSDDAQNCHDDEPS.

This sequence belongs to the RbfA family. Monomer. Binds 30S ribosomal subunits, but not 50S ribosomal subunits or 70S ribosomes.

Its subcellular location is the cytoplasm. Functionally, one of several proteins that assist in the late maturation steps of the functional core of the 30S ribosomal subunit. Associates with free 30S ribosomal subunits (but not with 30S subunits that are part of 70S ribosomes or polysomes). Required for efficient processing of 16S rRNA. May interact with the 5'-terminal helix region of 16S rRNA. The polypeptide is Ribosome-binding factor A (Synechococcus sp. (strain WH7803)).